We begin with the raw amino-acid sequence, 347 residues long: UDP-3-O-acylglucosamine N-acyltransferase (347 aa).

H241 acts as the Proton acceptor in catalysis.

Belongs to the transferase hexapeptide repeat family. LpxD subfamily. In terms of assembly, homotrimer.

It catalyses the reaction a UDP-3-O-[(3R)-3-hydroxyacyl]-alpha-D-glucosamine + a (3R)-hydroxyacyl-[ACP] = a UDP-2-N,3-O-bis[(3R)-3-hydroxyacyl]-alpha-D-glucosamine + holo-[ACP] + H(+). Its pathway is bacterial outer membrane biogenesis; LPS lipid A biosynthesis. Its function is as follows. Catalyzes the N-acylation of UDP-3-O-acylglucosamine using 3-hydroxyacyl-ACP as the acyl donor. Is involved in the biosynthesis of lipid A, a phosphorylated glycolipid that anchors the lipopolysaccharide to the outer membrane of the cell. This is UDP-3-O-acylglucosamine N-acyltransferase from Nitrosococcus oceani (strain ATCC 19707 / BCRC 17464 / JCM 30415 / NCIMB 11848 / C-107).